The chain runs to 180 residues: Large ribosomal subunit protein uL5 (180 aa).

This sequence belongs to the universal ribosomal protein uL5 family. Part of the 50S ribosomal subunit; part of the 5S rRNA/L5/L18/L25 subcomplex. Contacts the 5S rRNA and the P site tRNA. Forms a bridge to the 30S subunit in the 70S ribosome.

This is one of the proteins that bind and probably mediate the attachment of the 5S RNA into the large ribosomal subunit, where it forms part of the central protuberance. In the 70S ribosome it contacts protein S13 of the 30S subunit (bridge B1b), connecting the 2 subunits; this bridge is implicated in subunit movement. Contacts the P site tRNA; the 5S rRNA and some of its associated proteins might help stabilize positioning of ribosome-bound tRNAs. This is Large ribosomal subunit protein uL5 from Cupriavidus metallidurans (strain ATCC 43123 / DSM 2839 / NBRC 102507 / CH34) (Ralstonia metallidurans).